A 194-amino-acid chain; its full sequence is ATP-dependent Clp protease proteolytic subunit (194 aa).

The Nucleophile role is filled by Ser97. His122 is an active-site residue.

This sequence belongs to the peptidase S14 family. In terms of assembly, fourteen ClpP subunits assemble into 2 heptameric rings which stack back to back to give a disk-like structure with a central cavity, resembling the structure of eukaryotic proteasomes.

The protein localises to the cytoplasm. It carries out the reaction Hydrolysis of proteins to small peptides in the presence of ATP and magnesium. alpha-casein is the usual test substrate. In the absence of ATP, only oligopeptides shorter than five residues are hydrolyzed (such as succinyl-Leu-Tyr-|-NHMec, and Leu-Tyr-Leu-|-Tyr-Trp, in which cleavage of the -Tyr-|-Leu- and -Tyr-|-Trp bonds also occurs).. Cleaves peptides in various proteins in a process that requires ATP hydrolysis. Has a chymotrypsin-like activity. Plays a major role in the degradation of misfolded proteins. The sequence is that of ATP-dependent Clp protease proteolytic subunit from Campylobacter jejuni subsp. jejuni serotype O:6 (strain 81116 / NCTC 11828).